The primary structure comprises 1124 residues: uncharacterized protein (1124 aa).

The N-terminal stretch at 1–28 (MALFPRSILIALVLSFVLNLGLVTKIHA) is a signal peptide. Transmembrane regions (helical) follow at residues 332-352 (IVTA…LLAG), 359-379 (EYIN…GINI), 393-413 (MIQW…SWVM), 495-515 (MLVS…AFMV), 522-542 (MISI…FLFA), 555-575 (MISF…MFAV), and 700-720 (IKNI…MYNF).

The protein belongs to the TrbL/VirB6 family.

The protein localises to the cell membrane. This is an uncharacterized protein from Rickettsia prowazekii (strain Madrid E).